A 21-amino-acid polypeptide reads, in one-letter code: Brevinin-2-related peptide (21 aa).

Leu21 bears the Leucine amide mark.

In terms of tissue distribution, expressed by the skin glands.

It is found in the secreted. Antimicrobial peptide with activity against Gram-negative and Gram-positive bacteria (MIC=13 uM against E.coli, MIC=25 uM against S.aureus) and fungi (MIC=25 uM against C.albicans). Also shows hemolytic activity (HC(50)=50 uM). In vitro, shows moderate inhibitory activity against HIV. This chain is Brevinin-2-related peptide, found in Lithobates septentrionalis (Mink frog).